Consider the following 360-residue polypeptide: Peptide chain release factor 1 (360 aa).

The residue at position 237 (Gln237) is an N5-methylglutamine.

This sequence belongs to the prokaryotic/mitochondrial release factor family. Methylated by PrmC. Methylation increases the termination efficiency of RF1.

Its subcellular location is the cytoplasm. Functionally, peptide chain release factor 1 directs the termination of translation in response to the peptide chain termination codons UAG and UAA. The polypeptide is Peptide chain release factor 1 (Stutzerimonas stutzeri (strain A1501) (Pseudomonas stutzeri)).